A 488-amino-acid polypeptide reads, in one-letter code: Multidrug resistance outer membrane protein MdtP (488 aa).

An N-terminal signal peptide occupies residues 1 to 23 (MINRQLSRLLLCSILGSTTLISG). Cys24 carries the N-palmitoyl cysteine lipid modification. The S-diacylglycerol cysteine moiety is linked to residue Cys24.

Belongs to the outer membrane factor (OMF) (TC 1.B.17) family. Could be part of a tripartite efflux system composed of MdtN, MdtO and MdtP.

Its subcellular location is the cell outer membrane. Could be involved in resistance to puromycin, acriflavine and tetraphenylarsonium chloride. In Escherichia coli (strain K12), this protein is Multidrug resistance outer membrane protein MdtP (mdtP).